Here is a 467-residue protein sequence, read N- to C-terminus: Nuclear distribution protein nudF 1 (467 aa).

The LisH domain occupies 9–41; that stretch reads QAEELHKSIIAYLASVNLSESATTLRAELGDAV. Positions 60-87 form a coiled coil; the sequence is TSVVRLQKKIMDLESRCAALQSELDSAT. WD repeat units lie at residues 113-154, 156-196, 200-247, 250-289, 292-352, 354-393, 398-428, and 429-466; these read SHRS…RTVK, HTKA…KNIR, GHDH…CVKT, GHVD…TRST, GHEH…IKTL, GHDN…KCVR, THEH…NGTP, and AATT…RVFA. Residues 417-437 show a composition bias toward low complexity; it reads GANGDAGANGTPAATTTSNGA. The interval 417–441 is disordered; that stretch reads GANGDAGANGTPAATTTSNGARQDP.

This sequence belongs to the WD repeat LIS1/nudF family. Self-associates. Interacts with nudE and dynein.

Its subcellular location is the cytoplasm. The protein resides in the cytoskeleton. It localises to the spindle pole. Functionally, positively regulates the activity of the minus-end directed microtubule motor protein dynein. May enhance dynein-mediated microtubule sliding by targeting dynein to the microtubule plus end. Required for nuclear migration during vegetative growth as well as development. Required for retrograde early endosome (EE) transport from the hyphal tip. Required for localization of dynein to the mitotic spindle poles. Recruits additional proteins to the dynein complex at SPBs. This Aspergillus clavatus (strain ATCC 1007 / CBS 513.65 / DSM 816 / NCTC 3887 / NRRL 1 / QM 1276 / 107) protein is Nuclear distribution protein nudF 1.